Consider the following 65-residue polypeptide: Large ribosomal subunit protein eL24 (65 aa).

Zn(2+) is bound by residues Cys-6, Cys-9, Cys-32, and Cys-36. Residues Cys-6–Cys-36 form a C4-type zinc finger.

This sequence belongs to the eukaryotic ribosomal protein eL24 family. As to quaternary structure, part of the 50S ribosomal subunit. Forms a cluster with proteins L3 and L14. Zn(2+) is required as a cofactor.

Its function is as follows. Binds to the 23S rRNA. The sequence is that of Large ribosomal subunit protein eL24 from Pyrobaculum arsenaticum (strain DSM 13514 / JCM 11321 / PZ6).